Consider the following 449-residue polypeptide: Tubulin beta-6 chain (449 aa).

Residues Gln-11, Glu-69, Ser-138, Gly-142, Thr-143, Gly-144, Asn-204, and Asn-226 each coordinate GTP. Mg(2+) is bound at residue Glu-69. The interval 425–449 (YQDATADDEGEYEEDEDEEEILDHE) is disordered. The span at 429 to 449 (TADDEGEYEEDEDEEEILDHE) shows a compositional bias: acidic residues.

This sequence belongs to the tubulin family. Dimer of alpha and beta chains. A typical microtubule is a hollow water-filled tube with an outer diameter of 25 nm and an inner diameter of 15 nM. Alpha-beta heterodimers associate head-to-tail to form protofilaments running lengthwise along the microtubule wall with the beta-tubulin subunit facing the microtubule plus end conferring a structural polarity. Microtubules usually have 13 protofilaments but different protofilament numbers can be found in some organisms and specialized cells. The cofactor is Mg(2+).

It is found in the cytoplasm. Its subcellular location is the cytoskeleton. In terms of biological role, tubulin is the major constituent of microtubules, a cylinder consisting of laterally associated linear protofilaments composed of alpha- and beta-tubulin heterodimers. Microtubules grow by the addition of GTP-tubulin dimers to the microtubule end, where a stabilizing cap forms. Below the cap, tubulin dimers are in GDP-bound state, owing to GTPase activity of alpha-tubulin. This chain is Tubulin beta-6 chain (TUBB6), found in Arabidopsis thaliana (Mouse-ear cress).